Here is a 255-residue protein sequence, read N- to C-terminus: Putative cysteine-rich repeat secretory protein 10 (255 aa).

Residues 1–26 (MFSSSVSISILVVVAMQFSFIHNVLS) form the signal peptide. Gnk2-homologous domains follow at residues 33-134 (YLQH…EIYT) and 140-252 (FKHY…LYPF).

The protein belongs to the cysteine-rich repeat secretory protein family.

The protein resides in the secreted. This chain is Putative cysteine-rich repeat secretory protein 10 (CRRSP10), found in Arabidopsis thaliana (Mouse-ear cress).